A 344-amino-acid polypeptide reads, in one-letter code: TATA box-binding protein-like 2 (344 aa).

The interval 78–143 (NKDRTVTGNK…SNQLSSETPN (66 aa)) is disordered. Residues 110 to 120 (GSGLNLNSNSS) show a composition bias toward low complexity. Residues 134–143 (SNQLSSETPN) show a composition bias toward polar residues.

Belongs to the TBP family. Interacts with TAF3.

It localises to the cytoplasm. The protein resides in the nucleus. Transcription factor required in complex with TAF3 for the differentiation of myoblasts into myocytes. The complex replaces TFIID at specific promoters at an early stage in the differentiation process. This Rattus norvegicus (Rat) protein is TATA box-binding protein-like 2.